A 510-amino-acid chain; its full sequence is ATP synthase subunit alpha (510 aa).

170-177 (GDRQTGKT) contacts ATP.

Belongs to the ATPase alpha/beta chains family. In terms of assembly, F-type ATPases have 2 components, CF(1) - the catalytic core - and CF(0) - the membrane proton channel. CF(1) has five subunits: alpha(3), beta(3), gamma(1), delta(1), epsilon(1). CF(0) has three main subunits: a(1), b(2) and c(9-12). The alpha and beta chains form an alternating ring which encloses part of the gamma chain. CF(1) is attached to CF(0) by a central stalk formed by the gamma and epsilon chains, while a peripheral stalk is formed by the delta and b chains.

The protein resides in the cell inner membrane. The enzyme catalyses ATP + H2O + 4 H(+)(in) = ADP + phosphate + 5 H(+)(out). Functionally, produces ATP from ADP in the presence of a proton gradient across the membrane. The alpha chain is a regulatory subunit. This is ATP synthase subunit alpha from Caulobacter sp. (strain K31).